Consider the following 1393-residue polypeptide: DNA glycosylase/AP lyase ROS1 (1393 aa).

3 disordered regions span residues 1–25, 98–186, and 237–265; these read MEKQRREESSFQQPPWIPQTPMKPF, SLSS…TSTR, and LSAPSTPKRKRSQGKRKGVQPKKNGSNLE. Positions 98–108 are enriched in low complexity; that stretch reads SLSSVSNNVAE. Over residues 117 to 126 the composition is skewed to basic residues; that stretch reads PKRKKHRPKV. Basic and acidic residues-rich tracts occupy residues 127–138 and 162–171; these read RREAKPKREPKP and KKVEVSKDQD. Positions 243–256 are enriched in basic residues; that stretch reads PKRKRSQGKRKGVQ. A DEMETER region spans residues 528–626; that stretch reads KVDLDDETDR…AFMSLASQFP (99 aa). Over residues 653 to 672 the composition is skewed to polar residues; that stretch reads EETMSSPPDHNHSSVTLKNT. Disordered stretches follow at residues 653–722 and 789–830; these read EETM…SVEV and SNQV…CSQQ. Residues 687–698 show a composition bias toward low complexity; sequence SRSSSEIAISAH. Residues 699–722 are compositionally biased toward basic and acidic residues; the sequence is ESVDKTTDSKEYVDSDRKGSSVEV. Residues 816–830 are compositionally biased toward polar residues; the sequence is KSSVDSSEPGCCSQQ. Residue Lys901 forms a Glycyl lysine isopeptide (Lys-Gly) (interchain with G-Cter in ubiquitin) linkage. 4 residues coordinate [4Fe-4S] cluster: Cys1038, Cys1045, Cys1048, and Cys1054.

This sequence belongs to the DNA glycosylase family. DEMETER subfamily. In terms of assembly, interacts (via the central region) with ZDP. Binds to RPA2A. Interacts with XRCC1. Interacts probably with a complex made of MBD7, IDM1, IDM2 and IDM3. Interacts with APE1L. The cofactor is [4Fe-4S] cluster. In terms of tissue distribution, expressed ubiquitously in both vegetative and reproductive organs.

The protein localises to the nucleus. Its subcellular location is the nucleolus. It catalyses the reaction 2'-deoxyribonucleotide-(2'-deoxyribose 5'-phosphate)-2'-deoxyribonucleotide-DNA = a 3'-end 2'-deoxyribonucleotide-(2,3-dehydro-2,3-deoxyribose 5'-phosphate)-DNA + a 5'-end 5'-phospho-2'-deoxyribonucleoside-DNA + H(+). With respect to regulation, stimulated by ZDP. Stimulated by XRCC1. Its function is as follows. Bifunctional DNA glycosylase/lyase, which excises 5-methylcytosine (5-meC) and 5-hydroxymethylcytosine (5-hmeC), leaving an apyrimidinic (AP) site that is subsequently incised by the lyase activity. Generates 3'-phosphor-alpha,beta-unsaturated aldehyde (3'-PUA) as a primary 5-meC excision intermediate. Prevents DNA hypermethylation, specifically in the promoter of otherwise silenced loci. May be involved in DNA repair through its nicking activity on methylated DNA. Binds with similar affinity to both methylated and non-methylated DNA. Highly distributive behavior on DNA substrates containing multiple 5-meC residues. Involved with Pol IV in the remodeling of the 5S rDNA chromatin via DNA methylation modifications during the first days of development post-germination. Participates in UV-B induced- and oxidative DNA damage repair. The polypeptide is DNA glycosylase/AP lyase ROS1 (Arabidopsis thaliana (Mouse-ear cress)).